The chain runs to 616 residues: Chaperone protein HscA (616 aa).

It belongs to the heat shock protein 70 family.

Chaperone involved in the maturation of iron-sulfur cluster-containing proteins. Has a low intrinsic ATPase activity which is markedly stimulated by HscB. Involved in the maturation of IscU. This is Chaperone protein HscA from Salmonella paratyphi A (strain ATCC 9150 / SARB42).